An 89-amino-acid polypeptide reads, in one-letter code: uncharacterized protein (89 aa).

A helical membrane pass occupies residues 39 to 61 (FVCFWSIWFWTGDISFSLLSMLV).

The protein localises to the membrane. This is an uncharacterized protein from Saccharomyces cerevisiae (strain ATCC 204508 / S288c) (Baker's yeast).